A 743-amino-acid chain; its full sequence is FHF complex subunit HOOK-interacting protein 2B (743 aa).

The interval 186–219 (CGEPTALPKDTTSHGDKDCSHDGAPARPQLDGES) is disordered. The segment covering 196–206 (TTSHGDKDCSH) has biased composition (basic and acidic residues).

Belongs to the FHIP family. Expressed in liver.

Able to activate MAPK/ERK and TGFB signaling pathways. May regulate the activity of genes involved in intestinal barrier function and immunoprotective inflammation. May play a role in cell proliferation. This Homo sapiens (Human) protein is FHF complex subunit HOOK-interacting protein 2B.